The sequence spans 418 residues: Queuine tRNA-ribosyltransferase accessory subunit 2 (418 aa).

The Zn(2+) site is built by Cys325, Cys327, Cys330, and His356.

The protein belongs to the queuine tRNA-ribosyltransferase family. QTRT2 subfamily. In terms of assembly, heterodimer of a catalytic subunit and an accessory subunit. Requires Zn(2+) as cofactor.

It is found in the cytoplasm. Functionally, non-catalytic subunit of the queuine tRNA-ribosyltransferase (TGT) that catalyzes the base-exchange of a guanine (G) residue with queuine (Q) at position 34 (anticodon wobble position) in tRNAs with GU(N) anticodons (tRNA-Asp, -Asn, -His and -Tyr), resulting in the hypermodified nucleoside queuosine (7-(((4,5-cis-dihydroxy-2-cyclopenten-1-yl)amino)methyl)-7-deazaguanosine). The polypeptide is Queuine tRNA-ribosyltransferase accessory subunit 2 (Drosophila melanogaster (Fruit fly)).